The sequence spans 528 residues: NAD(P)H-quinone oxidoreductase chain 4 1 (528 aa).

14 consecutive transmembrane segments (helical) span residues 7–27, 32–52, 86–106, 114–134, 136–156, 168–188, 208–228, 242–262, 276–296, 310–330, 331–351, 375–395, 417–437, and 463–483; these read FPWL…IPLI, WVRW…AYVF, LSLP…VAAW, LFFF…LAQD, LLFF…ISIW, FILY…AMAF, ALEL…LPIF, SAPI…YGLI, FAPV…LAAF, IAHM…GING, AVLQ…LTGI, FALF…SGFV, GIAL…LSML, and MAVA…PRLA.

Belongs to the complex I subunit 4 family.

Its subcellular location is the cellular thylakoid membrane. It catalyses the reaction a plastoquinone + NADH + (n+1) H(+)(in) = a plastoquinol + NAD(+) + n H(+)(out). The enzyme catalyses a plastoquinone + NADPH + (n+1) H(+)(in) = a plastoquinol + NADP(+) + n H(+)(out). NDH-1 shuttles electrons from NAD(P)H, via FMN and iron-sulfur (Fe-S) centers, to quinones in the respiratory chain. The immediate electron acceptor for the enzyme in this species is believed to be plastoquinone. Couples the redox reaction to proton translocation (for every two electrons transferred, four hydrogen ions are translocated across the cytoplasmic membrane), and thus conserves the redox energy in a proton gradient. The protein is NAD(P)H-quinone oxidoreductase chain 4 1 of Synechococcus sp. (strain JA-2-3B'a(2-13)) (Cyanobacteria bacterium Yellowstone B-Prime).